A 121-amino-acid chain; its full sequence is Acidic phospholipase A2 PLA-2 (121 aa).

7 cysteine pairs are disulfide-bonded: Cys-26–Cys-115, Cys-28–Cys-44, Cys-43–Cys-95, Cys-49–Cys-121, Cys-50–Cys-88, Cys-57–Cys-81, and Cys-75–Cys-86. Ca(2+) is bound by residues Tyr-27, Gly-29, and Gly-31. His-47 is an active-site residue. Residue Asp-48 coordinates Ca(2+). Residue Asp-89 is part of the active site.

Belongs to the phospholipase A2 family. Group II subfamily. D49 sub-subfamily. Requires Ca(2+) as cofactor. In terms of tissue distribution, expressed by the venom gland.

The protein localises to the secreted. The enzyme catalyses a 1,2-diacyl-sn-glycero-3-phosphocholine + H2O = a 1-acyl-sn-glycero-3-phosphocholine + a fatty acid + H(+). Its function is as follows. PLA2 catalyzes the calcium-dependent hydrolysis of the 2-acyl groups in 3-sn-phosphoglycerides. This is Acidic phospholipase A2 PLA-2 from Eristicophis macmahoni (Leaf-nosed viper).